The chain runs to 156 residues: MNINLTLIAQAISFAILIWFTTKFVWPYLLNAIETRQKTIADGLAAAERGKQELDMATQRSAEVVNDAKQKATSIIAQAEKRASEIVEEAKANAKAEGDRIIAGAKAEIDQEVNRAKEGLRQQVSALAVAGAEKILRKEIDAKAHADLLNAIANEL.

The helical transmembrane segment at 7-29 threads the bilayer; that stretch reads LIAQAISFAILIWFTTKFVWPYL.

It belongs to the ATPase B chain family. In terms of assembly, F-type ATPases have 2 components, F(1) - the catalytic core - and F(0) - the membrane proton channel. F(1) has five subunits: alpha(3), beta(3), gamma(1), delta(1), epsilon(1). F(0) has three main subunits: a(1), b(2) and c(10-14). The alpha and beta chains form an alternating ring which encloses part of the gamma chain. F(1) is attached to F(0) by a central stalk formed by the gamma and epsilon chains, while a peripheral stalk is formed by the delta and b chains.

The protein localises to the cell inner membrane. F(1)F(0) ATP synthase produces ATP from ADP in the presence of a proton or sodium gradient. F-type ATPases consist of two structural domains, F(1) containing the extramembraneous catalytic core and F(0) containing the membrane proton channel, linked together by a central stalk and a peripheral stalk. During catalysis, ATP synthesis in the catalytic domain of F(1) is coupled via a rotary mechanism of the central stalk subunits to proton translocation. In terms of biological role, component of the F(0) channel, it forms part of the peripheral stalk, linking F(1) to F(0). This is ATP synthase subunit b from Methylobacillus flagellatus (strain ATCC 51484 / DSM 6875 / VKM B-1610 / KT).